Here is a 343-residue protein sequence, read N- to C-terminus: Mas-related G-protein coupled receptor member F (343 aa).

Topologically, residues 1–44 (MAGNCSWEAHSTNQNKMCPGMSEARELYSRGFLTIEQIATLPPP) are extracellular. An N-linked (GlcNAc...) asparagine glycan is attached at Asn4. Residues 45-66 (AVTNYIFLLLCLCGLVGNGLVL) form a helical membrane-spanning segment. At 67–82 (WFFGFSIKRTPFSIYF) the chain is on the cytoplasmic side. The chain crosses the membrane as a helical span at residues 83 to 104 (LHLASADGMYLFSKAVIALLNM). Residues 105–123 (GTFLGSFPDYIRRVSRIVG) lie on the Extracellular side of the membrane. The chain crosses the membrane as a helical span at residues 124–144 (LCTFFTGVSLLPAISIERCVS). Topologically, residues 145–160 (VIFPTWYWRRRPKRLS) are cytoplasmic. Residues 161 to 181 (AGVCALLWMLSFLVTSIHNYF) traverse the membrane as a helical segment. The Extracellular segment spans residues 182–198 (CMFLGHEAPGTVCRNMD). A helical transmembrane segment spans residues 199–220 (IALGILLFFLFCPLMVLPCLAL). At 221–241 (ILHVECRARRRQRSAKLNHVV) the chain is on the cytoplasmic side. The chain crosses the membrane as a helical span at residues 242 to 263 (LAIVSVFLVSSIYLGIDWFLFW). The Extracellular portion of the chain corresponds to 264–273 (VFQIPAPFPE). Residues 274-294 (YVTDLCICINSSAKPIVYFLA) form a helical membrane-spanning segment. Topologically, residues 295-343 (GRDKSQRLWEPLRVVFQRALRDGAEPGDAASSTPNTVTMEMQCPSGNAS) are cytoplasmic. Residues 318–343 (AEPGDAASSTPNTVTMEMQCPSGNAS) form a disordered region. Positions 324–343 (ASSTPNTVTMEMQCPSGNAS) are enriched in polar residues.

Belongs to the G-protein coupled receptor 1 family. Mas subfamily.

It is found in the cell membrane. Its function is as follows. Orphan receptor. May bind to a neuropeptide and may regulate nociceptor function and/or development, including the sensation or modulation of pain. This chain is Mas-related G-protein coupled receptor member F (Mrgprf), found in Mus musculus (Mouse).